A 640-amino-acid polypeptide reads, in one-letter code: uncharacterized protein (640 aa).

The interval 594-614 (QCSSDHCKPGSSETLPEATNE) is disordered.

This is an uncharacterized protein from Rattus norvegicus (Rat).